Consider the following 430-residue polypeptide: Type II methyltransferase M.Sau96I (430 aa).

The 55-residue stretch at 9–63 (IEKMKNQNIKTQTELAEKIDISKSQLSFMFSDEYEPLKKNVIKLADVLKVSPNDI) folds into the HTH cro/C1-type domain. The SAM-dependent MTase C5-type domain occupies 99–429 (YNVFETFAGA…KSLVHYLNQF (331 aa)). The active site involves Cys-174.

Belongs to the class I-like SAM-binding methyltransferase superfamily. C5-methyltransferase family.

It carries out the reaction a 2'-deoxycytidine in DNA + S-adenosyl-L-methionine = a 5-methyl-2'-deoxycytidine in DNA + S-adenosyl-L-homocysteine + H(+). Its function is as follows. A methylase that recognizes the double-stranded sequence 5'-GGNCC-3', methylates C-4 on both strands, and protects the DNA from cleavage by the Sau96I endonuclease. The chain is Type II methyltransferase M.Sau96I from Staphylococcus aureus.